Consider the following 203-residue polypeptide: Large ribosomal subunit protein bL25 (203 aa).

Belongs to the bacterial ribosomal protein bL25 family. CTC subfamily. As to quaternary structure, part of the 50S ribosomal subunit; part of the 5S rRNA/L5/L18/L25 subcomplex. Contacts the 5S rRNA. Binds to the 5S rRNA independently of L5 and L18.

This is one of the proteins that binds to the 5S RNA in the ribosome where it forms part of the central protuberance. This is Large ribosomal subunit protein bL25 from Wolbachia pipientis wMel.